The sequence spans 188 residues: UPF0301 protein CPn_0139/CP_0633/CPj0139/CpB0140 (188 aa).

This sequence belongs to the UPF0301 (AlgH) family.

The sequence is that of UPF0301 protein CPn_0139/CP_0633/CPj0139/CpB0140 from Chlamydia pneumoniae (Chlamydophila pneumoniae).